Here is a 243-residue protein sequence, read N- to C-terminus: Leucyl/phenylalanyl-tRNA--protein transferase (243 aa).

It belongs to the L/F-transferase family.

Its subcellular location is the cytoplasm. The catalysed reaction is N-terminal L-lysyl-[protein] + L-leucyl-tRNA(Leu) = N-terminal L-leucyl-L-lysyl-[protein] + tRNA(Leu) + H(+). The enzyme catalyses N-terminal L-arginyl-[protein] + L-leucyl-tRNA(Leu) = N-terminal L-leucyl-L-arginyl-[protein] + tRNA(Leu) + H(+). It catalyses the reaction L-phenylalanyl-tRNA(Phe) + an N-terminal L-alpha-aminoacyl-[protein] = an N-terminal L-phenylalanyl-L-alpha-aminoacyl-[protein] + tRNA(Phe). In terms of biological role, functions in the N-end rule pathway of protein degradation where it conjugates Leu, Phe and, less efficiently, Met from aminoacyl-tRNAs to the N-termini of proteins containing an N-terminal arginine or lysine. The protein is Leucyl/phenylalanyl-tRNA--protein transferase of Vibrio cholerae serotype O1 (strain ATCC 39315 / El Tor Inaba N16961).